A 36-amino-acid polypeptide reads, in one-letter code: Kappa-isophellitoxin-Tst1a (36 aa).

Residues 2–36 enclose the ShKT domain; the sequence is CENNFSDRECERRKKDCDSSMKFRELSCPKTCGTC. Intrachain disulfides connect C2–C36, C11–C29, and C18–C33.

The protein belongs to the sea anemone type 1 potassium channel toxin family. Type 1a subfamily. In terms of tissue distribution, predominantly expressed in mesenterial filaments (at protein level), a morphological structure that has a functional role in prey killing and digestion. Also expressed in club-tips, tentacles, actinopharynx, body column, mesenterial filaments and pedal disk.

It localises to the secreted. Its subcellular location is the nematocyst. Functionally, probable toxin with unknown function. Does not inhibit all channels tested. Is not cytotoxic on macrophage. This is Kappa-isophellitoxin-Tst1a from Telmatactis stephensoni (Sea anemone).